Here is a 378-residue protein sequence, read N- to C-terminus: 1-acyl-sn-glycerol-3-phosphate acyltransferase delta (378 aa).

Residues 11–31 (FLCHLVFCYVFIASGLIINTI) form a helical membrane-spanning segment. The HXXXXD motif signature appears at 96 to 101 (HKFEID). Helical transmembrane passes span 125 to 145 (ELAY…VFCS), 307 to 327 (TLVN…QFLV), and 338 to 358 (LASF…MIGV).

This sequence belongs to the 1-acyl-sn-glycerol-3-phosphate acyltransferase family.

It localises to the endoplasmic reticulum membrane. It catalyses the reaction a 1-acyl-sn-glycero-3-phosphate + an acyl-CoA = a 1,2-diacyl-sn-glycero-3-phosphate + CoA. It carries out the reaction (4Z,7Z,10Z,13Z,16Z,19Z)-docosahexaenoyl-CoA + 1-hexadecanoyl-sn-glycero-3-phosphate = 1-hexadecanoyl-2-(4Z,7Z,10Z,13Z,16Z,19Z-docosahexaenoyl)-sn-glycero-3-phosphate + CoA. The enzyme catalyses 1-octadecanoyl-sn-glycero-3-phosphate + (9Z,12Z)-octadecadienoyl-CoA = 1-octadecanoyl-2-(9Z,12Z-octadecadienoyl)-sn-glycero-3-phosphate + CoA. The catalysed reaction is 1-octadecanoyl-sn-glycero-3-phosphate + (4Z,7Z,10Z,13Z,16Z,19Z)-docosahexaenoyl-CoA = 1-octadecanoyl-2-(4Z,7Z,10Z,13Z,16Z,19Z-docosahexaenoyl)-sn-glycero-3-phosphate + CoA. It catalyses the reaction (4Z,7Z,10Z,13Z,16Z,19Z)-docosahexaenoyl-CoA + 1-(9Z-octadecenoyl)-sn-glycero-3-phosphate = 1-(9Z-octadecenoyl)-2-(4Z,7Z,10Z,13Z,16Z,19Z-docosahexaenoyl)-sn-glycero-3-phosphate + CoA. The protein operates within phospholipid metabolism; CDP-diacylglycerol biosynthesis; CDP-diacylglycerol from sn-glycerol 3-phosphate: step 2/3. Converts 1-acyl-sn-glycerol-3-phosphate (lysophosphatidic acid or LPA) into 1,2-diacyl-sn-glycerol-3-phosphate (phosphatidic acid or PA) by incorporating an acyl moiety at the sn-2 position of the glycerol backbone. Exhibits high acyl-CoA specificity for polyunsaturated fatty acyl-CoA, especially docosahexaenoyl-CoA (22:6-CoA, DHA-CoA). In Pongo abelii (Sumatran orangutan), this protein is 1-acyl-sn-glycerol-3-phosphate acyltransferase delta (AGPAT4).